We begin with the raw amino-acid sequence, 469 residues long: GTPase Der (469 aa).

2 EngA-type G domains span residues 3–167 (PTLV…PEEE) and 176–349 (PKIA…AAAF). GTP-binding positions include 9–16 (GRPNVGKS), 56–60 (DTGGL), 119–122 (NKAE), 182–189 (GRPNVGKS), 229–233 (DTAGV), and 294–297 (NKWD). In terms of domain architecture, KH-like spans 350–436 (IKLSTPKLTR…RIQIKEDEGK (87 aa)). Positions 432–443 (EDEGKNPFEGKK) are enriched in basic and acidic residues. Positions 432-469 (EDEGKNPFEGKKRAPLSESEATRMRRKKRVRRKVYGAD) are disordered. A compositionally biased stretch (basic residues) spans 455–469 (MRRKKRVRRKVYGAD).

This sequence belongs to the TRAFAC class TrmE-Era-EngA-EngB-Septin-like GTPase superfamily. EngA (Der) GTPase family. As to quaternary structure, associates with the 50S ribosomal subunit.

Functionally, GTPase that plays an essential role in the late steps of ribosome biogenesis. In Thiobacillus denitrificans (strain ATCC 25259 / T1), this protein is GTPase Der.